The following is a 612-amino-acid chain: UvrABC system protein C (612 aa).

The GIY-YIG domain maps to Ala13 to Thr92. A UVR domain is found at Lys204–Val239.

Belongs to the UvrC family. Interacts with UvrB in an incision complex.

It is found in the cytoplasm. In terms of biological role, the UvrABC repair system catalyzes the recognition and processing of DNA lesions. UvrC both incises the 5' and 3' sides of the lesion. The N-terminal half is responsible for the 3' incision and the C-terminal half is responsible for the 5' incision. The chain is UvrABC system protein C from Lachnospira eligens (strain ATCC 27750 / DSM 3376 / VPI C15-48 / C15-B4) (Eubacterium eligens).